The sequence spans 438 residues: Phospholipase D Y (438 aa).

Positions 1–19 are cleaved as a signal peptide; that stretch reads MIINRLFIIIVLFFVNVNS. N-linked (GlcNAc...) asparagine glycosylation is present at asparagine 50. The 28-residue stretch at 145-172 folds into the PLD phosphodiesterase 1 domain; sequence GSGVLHTKLIIIDESSAYVGSANADWSS. Catalysis depends on residues histidine 150, lysine 152, and aspartate 157. Asparagine 223, asparagine 336, and asparagine 394 each carry an N-linked (GlcNAc...) asparagine glycan. The PLD phosphodiesterase 2 domain maps to 373 to 399; sequence YTRVNHAKFMVTEKQSYVGTSNWSQDY.

This sequence belongs to the phospholipase D family.

It catalyses the reaction a 1,2-diacyl-sn-glycero-3-phosphocholine + H2O = a 1,2-diacyl-sn-glycero-3-phosphate + choline + H(+). Its activity is regulated as follows. Inhibited by butan-1-ol. In terms of biological role, hydrolyzes membrane phospholipids, such as PtdCho (phosphatidylcholine), producing the free headgroup and PtdOH (phosphatidic acid; signaling molecule on its own). The chain is Phospholipase D Y (pldY) from Dictyostelium discoideum (Social amoeba).